Reading from the N-terminus, the 440-residue chain is Fibulin-7 (440 aa).

The N-terminal stretch at 1 to 24 (MGPGSQRALFLLLLLLASPGARAF) is a signal peptide. Residues 28–73 (LNKQQLLTTIRQLQQLLKGQETRFTEGIRNMKSRLAALQNTVNKMT) adopt a coiled-coil conformation. The region spanning 79 to 136 (VSCPALEAPPDGKKFGSKYLVDHEVYFTCNPGFQLVGPSSVVCLANGSWTGEQPRCRD) is the Sushi domain. Intrachain disulfides connect C81-C121, C107-C134, C140-C151, C145-C160, C162-C171, C229-C245, C241-C254, C256-C269, C275-C288, C282-C297, and C302-C319. N124 carries an N-linked (GlcNAc...) asparagine glycan. Residues 136–172 (DISECSSQPCHNGGTCVEGINHYRCICPPGKTGNRCQ) enclose the EGF-like 1; calcium-binding domain. Residues 225–270 (DVNECEIYGQKGRPRLCMHACVNTPGSYRCTCPSGYRILADGKSCE) enclose the EGF-like 2; calcium-binding domain. Residues 271 to 320 (DVDECAGPQHMCPRGTTCINTGGGFQCVNPECPEGSGNISYVKTSPFQCE) enclose the EGF-like 3; calcium-binding domain. The N-linked (GlcNAc...) asparagine glycan is linked to N308.

Belongs to the fibulin family. As to quaternary structure, interacts with heparin, FBLN1, FN1 and DSPP. Preferentially binds dental mesenchyme cells and odontoblasts but not dental epithelial cells or nondental cells. Binding requires a heparan sulfate-containing receptor on the cell surface as well as an integrin. N-glycosylated. As to expression, highly expressed in newborn incisors and molars. A weaker expression is seen in the brain, kidneys, muscles and bones.

The protein resides in the secreted. It is found in the extracellular space. It localises to the extracellular matrix. Its function is as follows. An adhesion molecule that interacts with extracellular matrix molecules in developing teeth and may play important roles in differentiation and maintenance of odontoblasts as well as in dentin formation. The polypeptide is Fibulin-7 (Fbln7) (Mus musculus (Mouse)).